Consider the following 148-residue polypeptide: SsrA-binding protein (148 aa).

It belongs to the SmpB family.

The protein localises to the cytoplasm. In terms of biological role, required for rescue of stalled ribosomes mediated by trans-translation. Binds to transfer-messenger RNA (tmRNA), required for stable association of tmRNA with ribosomes. tmRNA and SmpB together mimic tRNA shape, replacing the anticodon stem-loop with SmpB. tmRNA is encoded by the ssrA gene; the 2 termini fold to resemble tRNA(Ala) and it encodes a 'tag peptide', a short internal open reading frame. During trans-translation Ala-aminoacylated tmRNA acts like a tRNA, entering the A-site of stalled ribosomes, displacing the stalled mRNA. The ribosome then switches to translate the ORF on the tmRNA; the nascent peptide is terminated with the 'tag peptide' encoded by the tmRNA and targeted for degradation. The ribosome is freed to recommence translation, which seems to be the essential function of trans-translation. This is SsrA-binding protein from Azoarcus sp. (strain BH72).